The primary structure comprises 490 residues: Katanin p60 ATPase-containing subunit A-like 1 (490 aa).

Met1 is subject to N-acetylmethionine. Residues 87–182 (SCQDEPVRDP…ASDGEIPKFD (96 aa)) are disordered. The span at 116 to 127 (SNREVRPLRKDM) shows a compositional bias: basic and acidic residues. The span at 128–139 (AGVGARGPVGRA) shows a compositional bias: low complexity. Over residues 143-169 (SKSEKPSTSRDKDNRARGKDDKGRKNM) the composition is skewed to basic and acidic residues. Residue Ser174 is modified to Phosphoserine. 248 to 255 (GPPGTGKT) contacts ATP.

Belongs to the AAA ATPase family. Katanin p60 subunit A1 subfamily. A-like 1 sub-subfamily. In terms of assembly, interacts with KATNB1 and KATNBL1.

It localises to the cytoplasm. The protein resides in the cytoskeleton. It is found in the spindle pole. Its subcellular location is the spindle. It catalyses the reaction n ATP + n H2O + a microtubule = n ADP + n phosphate + (n+1) alpha/beta tubulin heterodimers.. In terms of biological role, regulates microtubule dynamics in Sertoli cells, a process that is essential for spermiogenesis and male fertility. Severs microtubules in an ATP-dependent manner, promoting rapid reorganization of cellular microtubule arrays. Has microtubule-severing activity in vitro. This Otolemur garnettii (Small-eared galago) protein is Katanin p60 ATPase-containing subunit A-like 1.